The following is a 165-amino-acid chain: Ubiquitin-like protein 4B (165 aa).

Residues 1–76 (MFLTVKLLLG…ISVVVRPLEK (76 aa)) form the Ubiquitin-like domain. Positions 139 to 165 (EPLAQPTGEREPEVLSPNKEEEKEAVQ) are disordered. Basic and acidic residues predominate over residues 146-165 (GEREPEVLSPNKEEEKEAVQ).

The protein resides in the cytoplasm. The protein is Ubiquitin-like protein 4B (UBL4B) of Bos taurus (Bovine).